The chain runs to 183 residues: uncharacterized protein (183 aa).

The tract at residues 1–36 (MAKRGNKKKQEAPLSLGKHTVGGRVGKPTNAKTGSA) is disordered. An RRM domain is found at 100-174 (TNVVIENLAP…FKLSCYIKKN (75 aa)).

It is found in the nucleus. The protein resides in the nucleolus. This is an uncharacterized protein from Schizosaccharomyces pombe (strain 972 / ATCC 24843) (Fission yeast).